A 156-amino-acid chain; its full sequence is 6,7-dimethyl-8-ribityllumazine synthase (156 aa).

Residues Trp28, 60-62 (SFE), and 82-84 (VVV) each bind 5-amino-6-(D-ribitylamino)uracil. 87 to 88 (GT) serves as a coordination point for (2S)-2-hydroxy-3-oxobutyl phosphate. Residue His90 is the Proton donor of the active site. Phe115 lines the 5-amino-6-(D-ribitylamino)uracil pocket. Arg129 is a (2S)-2-hydroxy-3-oxobutyl phosphate binding site.

It belongs to the DMRL synthase family.

The catalysed reaction is (2S)-2-hydroxy-3-oxobutyl phosphate + 5-amino-6-(D-ribitylamino)uracil = 6,7-dimethyl-8-(1-D-ribityl)lumazine + phosphate + 2 H2O + H(+). It functions in the pathway cofactor biosynthesis; riboflavin biosynthesis; riboflavin from 2-hydroxy-3-oxobutyl phosphate and 5-amino-6-(D-ribitylamino)uracil: step 1/2. In terms of biological role, catalyzes the formation of 6,7-dimethyl-8-ribityllumazine by condensation of 5-amino-6-(D-ribitylamino)uracil with 3,4-dihydroxy-2-butanone 4-phosphate. This is the penultimate step in the biosynthesis of riboflavin. The protein is 6,7-dimethyl-8-ribityllumazine synthase of Kocuria rhizophila (strain ATCC 9341 / DSM 348 / NBRC 103217 / DC2201).